The primary structure comprises 239 residues: MSNNVISPEFDEQGRALRRIRSFVRRQGRLTKGQQYALDTLWPAMGTDYQAQPLDLTALFGRAAPVTLEIGFGMGASLVTMAAAHPEQNFIGIEVHLPGVGACLASAQEAGVSNLRVMCHDAVEVLEQMIPDASLALVQLFFPDPWHKARHNKRRIIQAPFVELVGRKLAAGGVFHMATDWQPYAEHMLAVMSDAAFFRSLSSTGDYVPRPASRPLTKFEQRGQRLGHGVWDLMFAKTV.

The S-adenosyl-L-methionine site is built by Glu69, Glu94, Asp121, and Asp144. Residue Asp144 is part of the active site. Lys148 lines the substrate pocket. Residues 150 to 155 are interaction with RNA; sequence RHNKRR. Residues Asp180 and 217-220 contribute to the substrate site; that span reads TKFE.

This sequence belongs to the class I-like SAM-binding methyltransferase superfamily. TrmB family. In terms of assembly, monomer.

The enzyme catalyses guanosine(46) in tRNA + S-adenosyl-L-methionine = N(7)-methylguanosine(46) in tRNA + S-adenosyl-L-homocysteine. The protein operates within tRNA modification; N(7)-methylguanine-tRNA biosynthesis. In terms of biological role, catalyzes the formation of N(7)-methylguanine at position 46 (m7G46) in tRNA. The sequence is that of tRNA (guanine-N(7)-)-methyltransferase from Sodalis glossinidius (strain morsitans).